We begin with the raw amino-acid sequence, 96 residues long: Putative pterin-4-alpha-carbinolamine dehydratase (96 aa).

Belongs to the pterin-4-alpha-carbinolamine dehydratase family.

The catalysed reaction is (4aS,6R)-4a-hydroxy-L-erythro-5,6,7,8-tetrahydrobiopterin = (6R)-L-erythro-6,7-dihydrobiopterin + H2O. This chain is Putative pterin-4-alpha-carbinolamine dehydratase, found in Brucella anthropi (strain ATCC 49188 / DSM 6882 / CCUG 24695 / JCM 21032 / LMG 3331 / NBRC 15819 / NCTC 12168 / Alc 37) (Ochrobactrum anthropi).